Here is an 81-residue protein sequence, read N- to C-terminus: Cytochrome b559 subunit alpha (81 aa).

Residues 21–35 traverse the membrane as a helical segment; the sequence is VIHSITIPALFIAGW. H23 lines the heme pocket.

This sequence belongs to the PsbE/PsbF family. Heterodimer of an alpha subunit and a beta subunit. PSII is composed of 1 copy each of membrane proteins PsbA, PsbB, PsbC, PsbD, PsbE, PsbF, PsbH, PsbI, PsbJ, PsbK, PsbL, PsbM, PsbT, PsbX, PsbY, PsbZ, Psb30/Ycf12, at least 3 peripheral proteins of the oxygen-evolving complex and a large number of cofactors. It forms dimeric complexes. Heme b is required as a cofactor.

The protein resides in the plastid. It localises to the chloroplast thylakoid membrane. In terms of biological role, this b-type cytochrome is tightly associated with the reaction center of photosystem II (PSII). PSII is a light-driven water:plastoquinone oxidoreductase that uses light energy to abstract electrons from H(2)O, generating O(2) and a proton gradient subsequently used for ATP formation. It consists of a core antenna complex that captures photons, and an electron transfer chain that converts photonic excitation into a charge separation. The chain is Cytochrome b559 subunit alpha from Tetradesmus obliquus (Green alga).